The chain runs to 122 residues: Lectin A (122 aa).

Tyr-38 serves as a coordination point for Ca(2+). An alpha-D-galactoside-binding residues include Glu-44, Gln-57, and Asp-96. Positions 96, 100, 103, and 104 each coordinate Ca(2+). Asp-103 provides a ligand contact to an alpha-D-galactoside.

It belongs to the LecA/PllA lectin family. As to quaternary structure, homotetramer.

Its function is as follows. Lectin that specifically binds alpha-galactoside-terminating glycoconjugates. Shows high apparent binding to the alpha-Gal epitope (Gal-alpha-1,3-Gal-beta-1,4-GlcNAc terminating glycans) as well as to Gal-alpha-1,4-GlcNAc and Gal-alpha-1,3-GalNAc. Gal-alpha-1,3-GalNAc may be one natural ligand bound by PllA both in the nematode symbiont and in infected insects. The protein is Lectin A of Photorhabdus laumondii subsp. laumondii (strain DSM 15139 / CIP 105565 / TT01) (Photorhabdus luminescens subsp. laumondii).